The sequence spans 117 residues: Large ribosomal subunit protein uL22 (117 aa).

It belongs to the universal ribosomal protein uL22 family. As to quaternary structure, part of the 50S ribosomal subunit.

Its function is as follows. This protein binds specifically to 23S rRNA; its binding is stimulated by other ribosomal proteins, e.g. L4, L17, and L20. It is important during the early stages of 50S assembly. It makes multiple contacts with different domains of the 23S rRNA in the assembled 50S subunit and ribosome. The globular domain of the protein is located near the polypeptide exit tunnel on the outside of the subunit, while an extended beta-hairpin is found that lines the wall of the exit tunnel in the center of the 70S ribosome. In Staphylococcus epidermidis (strain ATCC 35984 / DSM 28319 / BCRC 17069 / CCUG 31568 / BM 3577 / RP62A), this protein is Large ribosomal subunit protein uL22.